The following is a 37-amino-acid chain: Large ribosomal subunit protein bL36c (37 aa).

It belongs to the bacterial ribosomal protein bL36 family.

The protein localises to the plastid. The protein is Large ribosomal subunit protein bL36c (rpl36) of Epifagus virginiana (Beechdrops).